Reading from the N-terminus, the 179-residue chain is Stathmin-2 (179 aa).

Positions 1–26 (MAKTAMAYKEKMKELSMLSLICSCFY) are membrane attachment. At serine 16 the chain carries Phosphoserine. 2 S-palmitoyl cysteine lipidation sites follow: cysteine 22 and cysteine 24. In terms of domain architecture, SLD spans 38 to 179 (DDMEVKQINK…NKELQVELSG (142 aa)). The interval 39-96 (DMEVKQINKRASGQAFELILKPPSPISEAPRTLASPKKKDLSLEEIQKKLEAAEGRRK) is regulatory/phosphorylation domain. Residue serine 50 is modified to Phosphoserine. A phosphoserine; by MAPK8 mark is found at serine 62 and serine 73. The stretch at 75–179 (KKKDLSLEEI…NKELQVELSG (105 aa)) forms a coiled coil. 2 positions are modified to phosphoserine: serine 80 and serine 97.

It belongs to the stathmin family. Interacts with ITM2C. Interacts with MAPK8. Interacts with KIFBP. Interacts (via the N-terminal region) with CIB1 (via C-terminal region); the interaction is direct, occurs in a calcium-dependent manner and attenuates the neurite outgrowth inhibition of STMN2. Sumoylated. In terms of processing, phosphorylated by MAPK9 and MAPK10 in the developing brain cortex. Phosphorylated mostly by MAPK8. Post-translationally, N-terminal palmitoylation promotes specific anchoring to the cytosolic leaflet of Golgi membranes and subsequent vesicular trafficking along dendrites and axons. Neuronal Stathmins are substrates for palmitoyltransferases ZDHHC3, ZDHHC7 and ZDHHC15. As to expression, expressed in neurons (at protein level). Present in growth cones and abundant in developing neurons.

Its subcellular location is the cytoplasm. It localises to the perinuclear region. The protein resides in the cell projection. The protein localises to the growth cone. It is found in the axon. Its subcellular location is the membrane. It localises to the golgi apparatus. The protein resides in the endosome. The protein localises to the lamellipodium. Its function is as follows. Regulator of microtubule stability. When phosphorylated by MAPK8, stabilizes microtubules and consequently controls neurite length in cortical neurons. In the developing brain, negatively regulates the rate of exit from multipolar stage and retards radial migration from the ventricular zone. The protein is Stathmin-2 (Stmn2) of Rattus norvegicus (Rat).